The following is a 913-amino-acid chain: DNA repair endonuclease XPF (913 aa).

Positions 1–454 (MDRGISAVRK…EVWVNLRKGD (454 aa)) are helicase-like. Leucine-zipper stretches follow at residues 233-254 (LNACLKELKCHNPSLEVEDLSL) and 270-298 (LDPLWHQLGAKTKSLVQDLKILRTLLQYL). Lys-289 carries the post-translational modification N6-acetyllysine. Basic and acidic residues predominate over residues 453 to 476 (GDGPKRTMKSDKRPKDTKNKERAS). Disordered regions lie at residues 453–525 (GDGP…CGGE) and 638–677 (VVPEEREGRDETNLDLARGTVSTDAPADTRKAGGQEHNGT). Residues 483-488 (KRKKRE) carry the Nuclear localization signal motif. Positions 500–509 (EPPEEGAAEE) are enriched in acidic residues. Phosphoserine is present on Ser-518. Residues 638–649 (VVPEEREGRDET) are compositionally biased toward basic and acidic residues. The nuclease stretch occupies residues 655 to 810 (RGTVSTDAPA…PSPHATAELF (156 aa)). The ERCC4 domain occupies 680-760 (SIVVDMREFR…RPVLLIEFDA (81 aa)). Positions 834–902 (TLPESDKYNP…QLYDFLHTAY (69 aa)) are hhH2, dimerization with ERCC1.

This sequence belongs to the XPF family. In terms of assembly, heterodimer composed of ERCC1 and ERCC4/XPF. Interacts with SLX4/BTBD12; this interaction is direct and links the ERCC1-ERCC4/XPF complex to SLX4, which may coordinate the action of the structure-specific endonuclease during DNA repair. Requires Mg(2+) as cofactor.

It is found in the nucleus. It localises to the chromosome. Functionally, catalytic component of a structure-specific DNA repair endonuclease responsible for the 5-prime incision during DNA repair, and which is essential for nucleotide excision repair (NER) and interstrand cross-link (ICL) repair. The sequence is that of DNA repair endonuclease XPF from Cricetulus griseus (Chinese hamster).